Here is a 194-residue protein sequence, read N- to C-terminus: Probable DNA-directed RNA polymerase subunit delta (194 aa).

The 70-residue stretch at 14–83 (LSMIEVARAI…GENKWGLRSW (70 aa)) folds into the HTH HARE-type domain. A disordered region spans residues 117–194 (GDEDAIDYSD…SDDEEDEEGE (78 aa)).

The protein belongs to the RpoE family. As to quaternary structure, RNAP is composed of a core of 2 alpha, a beta and a beta' subunits. The core is associated with a delta subunit and one of several sigma factors.

Functionally, participates in both the initiation and recycling phases of transcription. In the presence of the delta subunit, RNAP displays an increased specificity of transcription, a decreased affinity for nucleic acids, and an increased efficiency of RNA synthesis because of enhanced recycling. In Streptococcus mutans serotype c (strain ATCC 700610 / UA159), this protein is Probable DNA-directed RNA polymerase subunit delta.